The sequence spans 385 residues: Ethanolamine kinase 2 (385 aa).

This sequence belongs to the choline/ethanolamine kinase family.

It carries out the reaction ethanolamine + ATP = phosphoethanolamine + ADP + H(+). It functions in the pathway phospholipid metabolism; phosphatidylethanolamine biosynthesis; phosphatidylethanolamine from ethanolamine: step 1/3. Highly specific for ethanolamine phosphorylation. Does not have choline kinase activity. The protein is Ethanolamine kinase 2 (Etnk2) of Rattus norvegicus (Rat).